The chain runs to 1211 residues: DNA-directed RNA polymerase subunit beta' (1211 aa).

Residues Cys60, Cys62, Cys75, and Cys78 each contribute to the Zn(2+) site. The Mg(2+) site is built by Asp450, Asp452, and Asp454. 4 residues coordinate Zn(2+): Cys819, Cys893, Cys900, and Cys903.

The protein belongs to the RNA polymerase beta' chain family. The RNAP catalytic core consists of 2 alpha, 1 beta, 1 beta' and 1 omega subunit. When a sigma factor is associated with the core the holoenzyme is formed, which can initiate transcription. Mg(2+) serves as cofactor. It depends on Zn(2+) as a cofactor.

The catalysed reaction is RNA(n) + a ribonucleoside 5'-triphosphate = RNA(n+1) + diphosphate. In terms of biological role, DNA-dependent RNA polymerase catalyzes the transcription of DNA into RNA using the four ribonucleoside triphosphates as substrates. This is DNA-directed RNA polymerase subunit beta' from Streptococcus equi subsp. zooepidemicus (strain H70).